A 209-amino-acid chain; its full sequence is Uracil phosphoribosyltransferase (209 aa).

5-phospho-alpha-D-ribose 1-diphosphate is bound by residues Arg-79, Arg-104, and 131–139 (DPMLATGGT). Residues Ile-194 and 199-201 (GDA) contribute to the uracil site. Asp-200 is a binding site for 5-phospho-alpha-D-ribose 1-diphosphate.

The protein belongs to the UPRTase family. It depends on Mg(2+) as a cofactor.

It carries out the reaction UMP + diphosphate = 5-phospho-alpha-D-ribose 1-diphosphate + uracil. It participates in pyrimidine metabolism; UMP biosynthesis via salvage pathway; UMP from uracil: step 1/1. Allosterically activated by GTP. Catalyzes the conversion of uracil and 5-phospho-alpha-D-ribose 1-diphosphate (PRPP) to UMP and diphosphate. The protein is Uracil phosphoribosyltransferase of Pseudoalteromonas translucida (strain TAC 125).